Consider the following 951-residue polypeptide: Pheromone-regulated membrane protein 10 (951 aa).

Polar residues-rich tracts occupy residues 1-10 (MSSSYGNNGD), 68-84 (GGST…NVGS), and 92-104 (RTAS…NRRQ). Disordered regions lie at residues 1–293 (MSSS…EDPI), 313–366 (AGKS…TMVS), and 433–487 (NDSS…LPNF). The segment covering 126-135 (DDDDEEEEEH) has biased composition (acidic residues). Residues 219-234 (PHQETNDGRNSAESHS) show a composition bias toward basic and acidic residues. 3 stretches are compositionally biased toward polar residues: residues 318–332 (PGTQ…SSEH), 354–366 (PFNQ…TMVS), and 468–484 (SQTN…SMNL). The next 10 membrane-spanning stretches (helical) occupy residues 635-655 (WVSV…AFGG), 657-677 (WINM…QFIV), 687-707 (VFEV…GSIP), 711-731 (ICFG…YIIL), 753-773 (IIYS…FGWI), 786-806 (NISP…LGLI), 811-831 (WTQL…TYFS), 841-861 (FTSA…SRIW), 863-883 (GFAV…GVAS), and 918-938 (VTMI…TLFI).

This sequence belongs to the ThrE exporter (TC 2.A.79) family.

Its subcellular location is the membrane. The chain is Pheromone-regulated membrane protein 10 from Kluyveromyces lactis (strain ATCC 8585 / CBS 2359 / DSM 70799 / NBRC 1267 / NRRL Y-1140 / WM37) (Yeast).